The sequence spans 266 residues: Glutamate racemase 1 (266 aa).

Residues 11-12 (DS) and 43-44 (YG) each bind substrate. The Proton donor/acceptor role is filled by C74. 75 to 76 (NT) contacts substrate. Catalysis depends on C182, which acts as the Proton donor/acceptor. 183–184 (TH) lines the substrate pocket.

The protein belongs to the aspartate/glutamate racemases family.

The enzyme catalyses L-glutamate = D-glutamate. Its pathway is cell wall biogenesis; peptidoglycan biosynthesis. In terms of biological role, provides the (R)-glutamate required for cell wall biosynthesis. The polypeptide is Glutamate racemase 1 (Caldanaerobacter subterraneus subsp. tengcongensis (strain DSM 15242 / JCM 11007 / NBRC 100824 / MB4) (Thermoanaerobacter tengcongensis)).